A 326-amino-acid chain; its full sequence is Zinc finger CCCH domain-containing protein 15 (326 aa).

Residues 1–14 (MADGGGGGEAGSGG) are compositionally biased toward gly residues. A disordered region spans residues 1–142 (MADGGGGGEA…SSSGSGSGEV (142 aa)). The span at 24–33 (KPPKNIRKRP) shows a compositional bias: basic residues. Residues 47–64 (SGAIAAARAKKAPSSTSK) are compositionally biased toward low complexity. Residues 81 to 100 (YESSRTIQASTDSRATATLE) show a composition bias toward polar residues. The span at 104-125 (EFDRDARAIRERQLKQAEESLK) shows a compositional bias: basic and acidic residues. A C3H1-type zinc finger spans residues 187 to 215 (DYQPDICKDYKETGYCGYGDSCKFMHDRG). The RING-type zinc finger occupies 265 to 303 (CYICREPFVDPVVTKCKHYFCEHCALKHHSKNKKCFVCN).

This chain is Zinc finger CCCH domain-containing protein 15, found in Oryza sativa subsp. japonica (Rice).